The primary structure comprises 91 residues: Small ribosomal subunit protein bS20 (91 aa).

Residues 1 to 26 (MANLKSSKKDIRRTARRKERNGEDRT) are disordered.

Belongs to the bacterial ribosomal protein bS20 family.

In terms of biological role, binds directly to 16S ribosomal RNA. The chain is Small ribosomal subunit protein bS20 from Leptospira biflexa serovar Patoc (strain Patoc 1 / Ames).